A 589-amino-acid polypeptide reads, in one-letter code: MGVVEDTEPPLKRAKRLADEPNGFSANSSVRGSSVNSNSLGDLMARPLPSQGDDETIGSKGVIRKSEFVRIITRALYSLGYDKTGAMLEEESGISLHNSTIKLFLQQVKDGKWDQSVKTLHRIGFPDEKAVKAASFLLLEQKFLEFLKVEKIADALRTLRNEMAPLRINTKRVHELASSLISPSSFISHTTSTPGKESVNSRSKVLEELQTLLPASVIIPEKRLECLVENSLHIQRDSCVFHNTLDSDLSLYSDHQCGKHQIPSQTAQILESHTDEVWFLQFSHNGKYLASSSKDQTAIIWEISADGHISLKHTLVGHHKPVIAILWSPDDRQVLTCGAEEVIRRWDVDSGDCVHMYEKGGISPISCGWYPDGQGIIAGMTDRSICMWDLDGREKECWKGQRTQKVSDIAMTDDGKWLVSVCKDSVISLFDREATVERLIEEEDMITSFSLSNDNKYILVNLLNQEIRLWNIEGDPKIVSRYKGHKRSRFIIRSCFGGYKQAFIASGSEDSQVYIWHRSTGKLIVELPGHAGAVNCVSWSPTNLHMLASASDDGTIRIWGLDRINQQNQKKKLVQGSSSNGVIHRCNGN.

Residues methionine 1 to isoleucine 57 are disordered. A compositionally biased stretch (low complexity) spans serine 25–serine 39. The region spanning arginine 64–leucine 96 is the LisH domain. Residues histidine 97–aspartate 154 enclose the CTLH domain. WD repeat units lie at residues serine 272–leucine 311, glycine 317–glutamate 358, glycine 360–tryptophan 398, glutamine 401–isoleucine 440, glutamate 442–serine 480, glycine 484–glutamate 526, and glycine 529–glutamine 569.

In terms of assembly, interacts with RANBPM. Expressed in roots, leaves and flowers.

It is found in the cytoplasm. Functionally, acts as a component involved in the crosstalk regulation between light, hormone and abiotic stress response. This Arabidopsis thaliana (Mouse-ear cress) protein is WD repeat-containing protein 26 homolog.